A 64-amino-acid chain; its full sequence is MNSFVVVLLLFIAILCNAEQESDENARSCNRLGKKCNSDGDCCRYGERCLSSGVGYYCKPDFGP.

Positions 1-18 (MNSFVVVLLLFIAILCNA) are cleaved as a signal peptide. Intrachain disulfides connect C29-C43, C36-C49, and C42-C58.

It belongs to the scorpion calcin-like family. In terms of tissue distribution, expressed by the venom gland.

It localises to the secreted. May increase intracellular calcium release through the activation of nuclear inositol 1,4,5-trisphosphate receptors (ITPR) of cardiomyocytes, thereby causing an increase in the contraction frequency of these cells. The chain is Phi-buthitoxin-Hj1a from Hottentotta judaicus (Black scorpion).